We begin with the raw amino-acid sequence, 88 residues long: Large ribosomal subunit protein bL27 (88 aa).

Residues 1-24 form a disordered region; sequence MAHKKGTGSTRNGRDSNAKRLGVK.

It belongs to the bacterial ribosomal protein bL27 family.

The sequence is that of Large ribosomal subunit protein bL27 from Synechococcus sp. (strain CC9605).